A 183-amino-acid polypeptide reads, in one-letter code: Small ribosomal subunit protein uS4c (183 aa).

Residues 82 to 143 (MRLDNILFRL…KQRSKALIQN (62 aa)) form the S4 RNA-binding domain.

This sequence belongs to the universal ribosomal protein uS4 family. In terms of assembly, part of the 30S ribosomal subunit. Contacts protein S5. The interaction surface between S4 and S5 is involved in control of translational fidelity.

Its subcellular location is the plastid. The protein resides in the chloroplast. Its function is as follows. One of the primary rRNA binding proteins, it binds directly to 16S rRNA where it nucleates assembly of the body of the 30S subunit. Functionally, with S5 and S12 plays an important role in translational accuracy. This is Small ribosomal subunit protein uS4c (rps4) from Gladiolus communis (Cornflag).